The sequence spans 65 residues: Large ribosomal subunit protein bL35 (65 aa).

Belongs to the bacterial ribosomal protein bL35 family.

The chain is Large ribosomal subunit protein bL35 from Acetivibrio thermocellus (strain ATCC 27405 / DSM 1237 / JCM 9322 / NBRC 103400 / NCIMB 10682 / NRRL B-4536 / VPI 7372) (Clostridium thermocellum).